We begin with the raw amino-acid sequence, 400 residues long: PHD finger protein 24 (400 aa).

Gly-2 is lipidated: N-myristoyl glycine. Residues 29-38 (RDRPSIRRGG) are compositionally biased toward basic and acidic residues. The tract at residues 29 to 65 (RDRPSIRRGGELPGSRRGTVEGSVQEVQEEKEAEASA) is disordered. Arg-36 is subject to Omega-N-methylarginine. Residue Ser-43 is modified to Phosphoserine. Thr-47 carries the phosphothreonine modification. At Ser-51 the chain carries Phosphoserine. The PHD-type zinc finger occupies 129–190 (NDEMCDVCEV…TGWSCYYCDN (62 aa)). Arg-307 carries the omega-N-methylarginine modification.

This chain is PHD finger protein 24, found in Mus musculus (Mouse).